The sequence spans 81 residues: ATP synthase subunit c, chloroplastic (81 aa).

Helical transmembrane passes span 3–23 and 57–77; these read PLIASASVIAAGLAVGLASIG and LAFMEALTIYGLVVALALLFA.

This sequence belongs to the ATPase C chain family. As to quaternary structure, F-type ATPases have 2 components, F(1) - the catalytic core - and F(0) - the membrane proton channel. F(1) has five subunits: alpha(3), beta(3), gamma(1), delta(1), epsilon(1). F(0) has four main subunits: a(1), b(1), b'(1) and c(10-14). The alpha and beta chains form an alternating ring which encloses part of the gamma chain. F(1) is attached to F(0) by a central stalk formed by the gamma and epsilon chains, while a peripheral stalk is formed by the delta, b and b' chains.

The protein localises to the plastid. It localises to the chloroplast thylakoid membrane. Its function is as follows. F(1)F(0) ATP synthase produces ATP from ADP in the presence of a proton or sodium gradient. F-type ATPases consist of two structural domains, F(1) containing the extramembraneous catalytic core and F(0) containing the membrane proton channel, linked together by a central stalk and a peripheral stalk. During catalysis, ATP synthesis in the catalytic domain of F(1) is coupled via a rotary mechanism of the central stalk subunits to proton translocation. Functionally, key component of the F(0) channel; it plays a direct role in translocation across the membrane. A homomeric c-ring of between 10-14 subunits forms the central stalk rotor element with the F(1) delta and epsilon subunits. This chain is ATP synthase subunit c, chloroplastic, found in Chaetosphaeridium globosum (Charophycean green alga).